Here is a 1025-residue protein sequence, read N- to C-terminus: MKFFALFIYRPVATILLSVAITLCGILGFRMLPVAPLPQVDFPVIMVSASLPGASPETMASSVATPLERSLGRIAGVSEMTSSSSLGSTRIILQFDFDRDINGAARDVQAAINAAQSLLPSGMPSRPTYRKANPSDAPIMILTLTSDTYSQGELYDFASTQLAPTISQIDGVGDVDVGGSSLPAVRVGLNPQALFNQGVSLDDVRTAISNANVRKPQGALEDGTHRWQIQTNDELKTAAEYQPLIIHYNNGGAVRLGDVATVTDSVQDVRNAGMTNAKPAILLMIRKLPEANIIQTVDSIRAKLPELQETIPAAIDLQIAQDRSPTIRASLEEVEQTLIISVALVILVVFLFLRSGRATIIPAVAVPVSLIGTFAAMYLCGFSLNNLSLMALTIATGFVVDDAIVVLENIARHLEAGMKPLQAALQGTREVGFTVLSMSLSLVAVFLPLLLMGGLPGRLLREFAVTLSVAIVISLLVSLTLTPMMCGWMLKASKPREQKRLRGFGRMLVALQQGYGKSLKWVLNHTRLVGVVLLGTIALNIWLYISIPKTFFPEQDTGVLMGGIQADQSISFQAMRGKLQDFMKIIRDDPAVDNVTGFTGGSRVNSGMMFITLKPRDERSETAQQIIDRLRVKLAKEPGANLFLMAVQDIRVGGRQSNASYQYTLLSDDLAALREWEPKIRKKLATLPELADVNSDQQDNGAEMNLVYDRDTMARLGIDVQAANSLLNNAFGQRQISTIYQPMNQYKVVMEVDPRYTQDISALEKMFVINNEGKAIPLSYFAKWQPANAPLSVNHQGLSAASTISFNLPTGKSLSDASAAIDRAMTQLGVPSTVRGSFAGTAQVFQETMNSQVILIIAAIATVYIVLGILYESYVHPLTILSTLPSAGVGALLALELFNAPFSLIALIGIMLLIGIVKKNAIMMVDFALEAQRHGNLTPQEAIFQACLLRFRPIMMTTLAALFGALPLVLSGGDGSELRQPLGITIVGGLVMSQLLTLYTTPVVYLFFDRLRLRFSRKPKQTVTE.

Helical transmembrane passes span 3-23 (FFAL…AITL), 333-353 (EVEQ…FLFL), 360-380 (IIPA…MYLC), 387-407 (LSLM…IVVL), 431-451 (VGFT…PLLL), 463-483 (FAVT…TLTP), 528-548 (LVGV…ISIP), 853-873 (VILI…LYES), 875-895 (VHPL…LLAL), 897-917 (LFNA…IGIV), 953-973 (PIMM…LSGG), and 984-1004 (ITIV…TPVV).

The protein belongs to the resistance-nodulation-cell division (RND) (TC 2.A.6) family. MdtC subfamily. Part of a tripartite efflux system composed of MdtA, MdtB and MdtC. MdtC forms a heteromultimer with MdtB.

The protein localises to the cell inner membrane. In terms of biological role, the MdtABC tripartite complex confers resistance against novobiocin and deoxycholate. This Escherichia coli O139:H28 (strain E24377A / ETEC) protein is Multidrug resistance protein MdtC.